The primary structure comprises 440 residues: Transposon Ty1-BL Gag polyprotein (440 aa).

3 stretches are compositionally biased toward polar residues: residues 20–31 (SVTSKEVQTTQD), 46–55 (VSTQANSQQP), and 137–168 (VGTHLNTPSPESGNSFPDSSSAKSNMTSTNQH). 3 disordered regions span residues 20–84 (SVTS…QNGP), 137–173 (VGTHLNTPSPESGNSFPDSSSAKSNMTSTNQHVRPPP), and 350–424 (QQES…TTEP). Residues 299–401 (NNGIPINNKV…NSQSRTARAH (103 aa)) form an RNA-binding region. Residues 363–372 (SPSDEKKDSR) show a composition bias toward basic and acidic residues. A compositionally biased stretch (polar residues) spans 373–411 (TYTNTTKPKSITRNSQKPNNSQSRTARAHNVSTFNNSPG).

In terms of assembly, homotrimer.

It is found in the cytoplasm. In terms of biological role, capsid protein (CA) is the structural component of the virus-like particle (VLP), forming the shell that encapsulates the retrotransposons dimeric RNA genome. The particles are assembled from trimer-clustered units and there are holes in the capsid shells that allow for the diffusion of macromolecules. CA also has nucleocapsid-like chaperone activity, promoting primer tRNA(i)-Met annealing to the multipartite primer-binding site (PBS), dimerization of Ty1 RNA and initiation of reverse transcription. This chain is Transposon Ty1-BL Gag polyprotein (TY1A-BL), found in Saccharomyces cerevisiae (strain ATCC 204508 / S288c) (Baker's yeast).